Consider the following 226-residue polypeptide: MRAPPLLLLLAACAPPPCAAAAPTPPGWEPTPDAPWCPYKVLPEGPEAGGGRLCFRSPARGFRCQAPGCVLHAPAGRSLRASVLRNRSVLLQWRLAPAAARRVRAFALNCSWRGAYTRFPCERVLLGASCRDYLLPDVHDSVLYRLCLQPLPLRAGPAAAAPETPEPAECVEFTAEPAGMQDIVVAMTAVGGSICVMLVVICLLVAYITENLMRPALARPGLRRHP.

Residues 1–20 (MRAPPLLLLLAACAPPPCAA) form the signal peptide. Residues 21–182 (AAPTPPGWEP…FTAEPAGMQD (162 aa)) are Extracellular-facing. Positions 74–166 (PAGRSLRASV…PAAAAPETPE (93 aa)) constitute a Fibronectin type-III domain. 2 N-linked (GlcNAc...) asparagine glycosylation sites follow: N86 and N109. A helical membrane pass occupies residues 183–203 (IVVAMTAVGGSICVMLVVICL). The Cytoplasmic segment spans residues 204–226 (LVAYITENLMRPALARPGLRRHP).

Its subcellular location is the membrane. The polypeptide is Fibronectin type III domain-containing protein 10 (FNDC10) (Homo sapiens (Human)).